The sequence spans 458 residues: UPF0210 protein MmarC6_1246 (458 aa).

This sequence belongs to the UPF0210 family.

The chain is UPF0210 protein MmarC6_1246 from Methanococcus maripaludis (strain C6 / ATCC BAA-1332).